We begin with the raw amino-acid sequence, 90 residues long: Nodulation protein F (90 aa).

Residues 4 to 89 form the Carrier domain; it reads QLESEIIGII…RHSGSHPRLA (86 aa). Serine 46 carries the O-(pantetheine 4'-phosphoryl)serine modification. The tract at residues 65–90 is disordered; that stretch reads RDEHGRGVVGSPERRRHSGSHPRLAH. Over residues 78-90 the composition is skewed to basic residues; it reads RRRHSGSHPRLAH.

Post-translationally, 4'-phosphopantetheine is transferred from CoA to a specific serine of apo-NodF.

Proposed to synthesize nod factor fatty acyl chain. Involved in trans-2,trans-4,trans-6,cis-11-octadecatetraenoic acid biosynthesis. The chain is Nodulation protein F (nodF) from Rhizobium meliloti (Ensifer meliloti).